The following is a 178-amino-acid chain: ATP synthase subunit delta (178 aa).

This sequence belongs to the ATPase delta chain family. F-type ATPases have 2 components, F(1) - the catalytic core - and F(0) - the membrane proton channel. F(1) has five subunits: alpha(3), beta(3), gamma(1), delta(1), epsilon(1). F(0) has three main subunits: a(1), b(2) and c(10-14). The alpha and beta chains form an alternating ring which encloses part of the gamma chain. F(1) is attached to F(0) by a central stalk formed by the gamma and epsilon chains, while a peripheral stalk is formed by the delta and b chains.

Its subcellular location is the cell membrane. Functionally, f(1)F(0) ATP synthase produces ATP from ADP in the presence of a proton or sodium gradient. F-type ATPases consist of two structural domains, F(1) containing the extramembraneous catalytic core and F(0) containing the membrane proton channel, linked together by a central stalk and a peripheral stalk. During catalysis, ATP synthesis in the catalytic domain of F(1) is coupled via a rotary mechanism of the central stalk subunits to proton translocation. In terms of biological role, this protein is part of the stalk that links CF(0) to CF(1). It either transmits conformational changes from CF(0) to CF(1) or is implicated in proton conduction. This chain is ATP synthase subunit delta, found in Anoxybacillus flavithermus (strain DSM 21510 / WK1).